The primary structure comprises 190 residues: MEHEGKNNMNGMEMEKGKRELGSRKGVELTMRVLALILTMAAATVLGVAKQTKVVSIKLIPTLPPLDITTTAKASYLSAFVYNISVNAIACGYTAISIAILMISRGRRSKKLLMVVLLGDLVMVALLFSGTGAASAIGLMGLHGNKHVMWKKVCGVFGKFCHRAAPSLPLTLLAAVVFMFLVVLDAIKLP.

Residues 1 to 21 form a disordered region; that stretch reads MEHEGKNNMNGMEMEKGKREL. Residues 1–28 lie on the Cytoplasmic side of the membrane; sequence MEHEGKNNMNGMEMEKGKRELGSRKGVE. The helical transmembrane segment at 29 to 49 threads the bilayer; the sequence is LTMRVLALILTMAAATVLGVA. At 50–83 the chain is on the extracellular side; the sequence is KQTKVVSIKLIPTLPPLDITTTAKASYLSAFVYN. A helical transmembrane segment spans residues 84–104; that stretch reads ISVNAIACGYTAISIAILMIS. At 105–111 the chain is on the cytoplasmic side; sequence RGRRSKK. The helical transmembrane segment at 112-132 threads the bilayer; sequence LLMVVLLGDLVMVALLFSGTG. Residues 133 to 163 lie on the Extracellular side of the membrane; the sequence is AASAIGLMGLHGNKHVMWKKVCGVFGKFCHR. Residues 164 to 184 form a helical membrane-spanning segment; sequence AAPSLPLTLLAAVVFMFLVVL. Residues 185–190 lie on the Cytoplasmic side of the membrane; that stretch reads DAIKLP.

The protein belongs to the Casparian strip membrane proteins (CASP) family. Homodimer and heterodimers.

The protein localises to the cell membrane. In Arabidopsis thaliana (Mouse-ear cress), this protein is CASP-like protein 1E2.